The chain runs to 292 residues: ATP synthase subunit a (292 aa).

6 consecutive transmembrane segments (helical) span residues 37–57 (IDSV…FWLC), 96–116 (FIAP…AMDM), 144–164 (VVPT…LVLC), 192–212 (PVFA…EYVA), 230–250 (LVFM…SGVL), and 263–283 (AIFH…LALI).

Belongs to the ATPase A chain family. In terms of assembly, F-type ATPases have 2 components, CF(1) - the catalytic core - and CF(0) - the membrane proton channel. CF(1) has five subunits: alpha(3), beta(3), gamma(1), delta(1), epsilon(1). CF(0) has three main subunits: a(1), b(2) and c(9-12). The alpha and beta chains form an alternating ring which encloses part of the gamma chain. CF(1) is attached to CF(0) by a central stalk formed by the gamma and epsilon chains, while a peripheral stalk is formed by the delta and b chains.

The protein localises to the cell inner membrane. Its function is as follows. Key component of the proton channel; it plays a direct role in the translocation of protons across the membrane. This Paracidovorax citrulli (strain AAC00-1) (Acidovorax citrulli) protein is ATP synthase subunit a.